The primary structure comprises 291 residues: RPE-retinal G protein-coupled receptor (291 aa).

Residues 1-15 (MAETSALPTGFGELE) are Extracellular-facing. Residues 16–36 (VLAVGMVLLVEALSGLSLNTL) traverse the membrane as a helical segment. Residues 37–52 (TIFSFCKTPELRTPCH) lie on the Cytoplasmic side of the membrane. Residues 53–73 (LLVLSLALADSGISLNALVAA) traverse the membrane as a helical segment. At 74–91 (TSSLLRRWPYGSDGCQAH) the chain is on the extracellular side. A disulfide bond links C88 and C162. Residues 92 to 112 (GFQGFVTALASICSSAAIAWG) form a helical membrane-spanning segment. Residues 113–130 (RYHHYCTRSQLAWNSAVS) are Cytoplasmic-facing. A helical membrane pass occupies residues 131–151 (LVLFVWLSSAFWAALPLLGWG). Topologically, residues 152–175 (HYDYEPLGTCCTLDYSKGDRNFTS) are extracellular. N172 carries N-linked (GlcNAc...) asparagine glycosylation. The helical transmembrane segment at 176–196 (FLFTMSFFNFAMPLFITITSY) threads the bilayer. Topologically, residues 197-219 (SLMEQKLGKSGHLQVNTTLPART) are cytoplasmic. Residues 220–240 (LLLGWGPYAILYLYAVIADVT) form a helical membrane-spanning segment. The Extracellular portion of the chain corresponds to 241–247 (SISPKLQ). A helical membrane pass occupies residues 248-268 (MVPALIAKMVPTINAINYALG). K255 is modified (N6-(retinylidene)lysine). Residues 269–291 (NEMVCRGIWQCLSPQKREKDRTK) lie on the Cytoplasmic side of the membrane.

This sequence belongs to the G-protein coupled receptor 1 family. Opsin subfamily. In terms of processing, covalently binds all-trans- and 11-cis-retinal. Preferentially expressed at high levels in the retinal pigment epithelium (RPE) and Mueller cells of the neural retina.

It localises to the membrane. Functionally, receptor for all-trans- and 11-cis-retinal. Binds preferentially to the former and may catalyze the isomerization of the chromophore by a retinochrome-like mechanism. In Homo sapiens (Human), this protein is RPE-retinal G protein-coupled receptor (RGR).